Consider the following 536-residue polypeptide: CTP synthase (536 aa).

Residues Met1 to Leu267 are amidoligase domain. Ser13 is a binding site for CTP. Ser13 serves as a coordination point for UTP. ATP contacts are provided by residues Ser14–Ile19 and Asp71. Mg(2+) is bound by residues Asp71 and Glu141. CTP is bound by residues Asp148–Glu150, Lys188–Gln193, and Lys224. UTP is bound by residues Lys188–Gln193 and Lys224. One can recognise a Glutamine amidotransferase type-1 domain in the interval Lys292–Gln534. An L-glutamine-binding site is contributed by Gly354. The active-site Nucleophile; for glutamine hydrolysis is the Cys381. Residues Leu382–Gln385, Glu405, and Arg462 each bind L-glutamine. Residues His507 and Glu509 contribute to the active site.

This sequence belongs to the CTP synthase family. As to quaternary structure, homotetramer.

It catalyses the reaction UTP + L-glutamine + ATP + H2O = CTP + L-glutamate + ADP + phosphate + 2 H(+). The catalysed reaction is L-glutamine + H2O = L-glutamate + NH4(+). It carries out the reaction UTP + NH4(+) + ATP = CTP + ADP + phosphate + 2 H(+). Its pathway is pyrimidine metabolism; CTP biosynthesis via de novo pathway; CTP from UDP: step 2/2. With respect to regulation, allosterically activated by GTP, when glutamine is the substrate; GTP has no effect on the reaction when ammonia is the substrate. The allosteric effector GTP functions by stabilizing the protein conformation that binds the tetrahedral intermediate(s) formed during glutamine hydrolysis. Inhibited by the product CTP, via allosteric rather than competitive inhibition. Its function is as follows. Catalyzes the ATP-dependent amination of UTP to CTP with either L-glutamine or ammonia as the source of nitrogen. Regulates intracellular CTP levels through interactions with the four ribonucleotide triphosphates. The protein is CTP synthase of Prochlorococcus marinus (strain MIT 9312).